We begin with the raw amino-acid sequence, 189 residues long: Probable nicotinate-nucleotide adenylyltransferase (189 aa).

The protein belongs to the NadD family.

It catalyses the reaction nicotinate beta-D-ribonucleotide + ATP + H(+) = deamido-NAD(+) + diphosphate. The protein operates within cofactor biosynthesis; NAD(+) biosynthesis; deamido-NAD(+) from nicotinate D-ribonucleotide: step 1/1. In terms of biological role, catalyzes the reversible adenylation of nicotinate mononucleotide (NaMN) to nicotinic acid adenine dinucleotide (NaAD). In Staphylococcus aureus (strain USA300 / TCH1516), this protein is Probable nicotinate-nucleotide adenylyltransferase.